Here is a 320-residue protein sequence, read N- to C-terminus: N-acetylneuraminate lyase (320 aa).

Positions 51 and 52 each coordinate aceneuramate. Tyr-143 functions as the Proton donor in the catalytic mechanism. Lys-173 serves as the catalytic Schiff-base intermediate with substrate. Aceneuramate contacts are provided by Ser-175, Gly-199, Asp-201, Glu-202, and Ser-218.

It belongs to the DapA family. NanA subfamily. As to quaternary structure, homotetramer.

It is found in the cytoplasm. The catalysed reaction is aceneuramate = aldehydo-N-acetyl-D-mannosamine + pyruvate. Its pathway is amino-sugar metabolism; N-acetylneuraminate degradation. Its function is as follows. Catalyzes the cleavage of N-acetylneuraminic acid (sialic acid) to form pyruvate and N-acetylmannosamine via a Schiff base intermediate. It prevents sialic acids from being recycled and returning to the cell surface. Involved in the N-glycolylneuraminic acid (Neu5Gc) degradation pathway. In Pongo abelii (Sumatran orangutan), this protein is N-acetylneuraminate lyase.